The primary structure comprises 342 residues: tRNA dimethylallyltransferase (342 aa).

39–46 (GPTGSGKT) is an ATP binding site. Residue 41 to 46 (TGSGKT) participates in substrate binding. Residues 64-67 (DSMQ) form an interaction with substrate tRNA region.

It belongs to the IPP transferase family. As to quaternary structure, monomer. It depends on Mg(2+) as a cofactor.

It carries out the reaction adenosine(37) in tRNA + dimethylallyl diphosphate = N(6)-dimethylallyladenosine(37) in tRNA + diphosphate. Catalyzes the transfer of a dimethylallyl group onto the adenine at position 37 in tRNAs that read codons beginning with uridine, leading to the formation of N6-(dimethylallyl)adenosine (i(6)A). The chain is tRNA dimethylallyltransferase from Chlamydia pneumoniae (Chlamydophila pneumoniae).